The sequence spans 478 residues: MATITCTRFTEEYQLFEELGKGAFSVVRRCVKVLAGQEYAAKIINTKKLSARDHQKLEREARICRLLKHPNIVRLHDSISEEGHHYLIFDLVTGGELFEDIVAREYYSEADASHCIQQILEAVLHCHQMGVVHRDLKPENLLLASKLKGAAVKLADFGLAIEVEGEQQAWFGFAGTPGYLSPEVLRKDPYGKPVDLWACGVILYILLVGYPPFWDEDQHRLYQQIKAGAYDFPSPEWDTVTPEAKDLINKMLTINPSKRITAAEALKHPWISHRSTVASCMHRQETVDCLKKFNARRKLKGAILTTMLATRNFSGGKSGGNKKNDGVKESSESTNTTIEDEDTKVRKQEIIKVTEQLIEAISNGDFESYTKMCDPGMTAFEPEALGNLVEGLDFHRFYFENLWSRNSKPVHTTILNPHIHLMGDESACIAYIRITQYLDAGGIPRTAQSEETRVWHRRDGKWQIVHFHRSGAPSVLPH.

Position 13 is a phosphotyrosine (Y13). The Protein kinase domain occupies 13–271 (YQLFEELGKG…AAEALKHPWI (259 aa)). Residues 19–27 (LGKGAFSVV) and K42 each bind ATP. D135 functions as the Proton acceptor in the catalytic mechanism. At S257 the chain carries Phosphoserine. The residue at position 286 (T286) is a Phosphothreonine; by autocatalysis. A calmodulin-binding region spans residues 290–300 (LKKFNARRKLK). Positions 310–320 (TRNFSGGKSGG) are interaction with BAALC. The disordered stretch occupies residues 314 to 341 (SGGKSGGNKKNDGVKESSESTNTTIEDE). Residues 322–331 (KKNDGVKESS) show a composition bias toward basic and acidic residues. 3 positions are modified to phosphoserine: S330, S331, and S333. 2 positions are modified to phosphothreonine: T336 and T337. At S404 the chain carries Phosphoserine.

It belongs to the protein kinase superfamily. CAMK Ser/Thr protein kinase family. CaMK subfamily. In terms of assembly, there are 4 genes encoding calcium/calmodulin-dependent protein kinase type II chains: CAMK2A, CAMK2B, CAMK2G and CAMK2D. The corresponding proteins assemble into homo- or heteromultimeric holoenzymes composed of 12 subunits with two hexameric rings stacked one on top of the other. Interacts with BAALC. Interacts with MPDZ. Interacts with SYN1. Interacts with CAMK2N2. Interacts with SYNGAP1. Interacts with SYNPO2. Interacts with SHANK3. Interacts with GRIN2B. Interacts with CACNB2. Interacts with LRRC7. Interacts with GRM5. Interacts with DAGLA (via C-terminal); this interaction is enhanced by autophosphorylation of CAMK2A at Thr-286. Interacts with CAMK2N1; this interaction requires CAMK2A activation by Ca(2+). Mg(2+) serves as cofactor. Autophosphorylation of Thr-286 following activation by Ca(2+)/calmodulin. Phosphorylation of Thr-286 locks the kinase into an activated state. Post-translationally, palmitoylated. Probably palmitoylated by ZDHHC3 and ZDHHC7. As to expression, expressed in brain. Expressed in skeletal muscle.

The protein localises to the cytoplasm. It is found in the synapse. It localises to the postsynaptic density. The protein resides in the cell projection. Its subcellular location is the dendritic spine. The protein localises to the dendrite. The enzyme catalyses L-seryl-[protein] + ATP = O-phospho-L-seryl-[protein] + ADP + H(+). It carries out the reaction L-threonyl-[protein] + ATP = O-phospho-L-threonyl-[protein] + ADP + H(+). Activated by Ca(2+)/calmodulin. Binding of calmodulin results in conformational change that relieves intrasteric autoinhibition and allows autophosphorylation of Thr-286 which turns the kinase in a constitutively active form and confers to the kinase a Ca(2+)-independent activity. Functionally, calcium/calmodulin-dependent protein kinase that functions autonomously after Ca(2+)/calmodulin-binding and autophosphorylation, and is involved in various processes, such as synaptic plasticity, neurotransmitter release and long-term potentiation. Member of the NMDAR signaling complex in excitatory synapses, it regulates NMDAR-dependent potentiation of the AMPAR and therefore excitatory synaptic transmission. Regulates dendritic spine development. Also regulates the migration of developing neurons. Phosphorylates the transcription factor FOXO3 to activate its transcriptional activity. Phosphorylates the transcription factor ETS1 in response to calcium signaling, thereby decreasing ETS1 affinity for DNA. In response to interferon-gamma (IFN-gamma) stimulation, catalyzes phosphorylation of STAT1, stimulating the JAK-STAT signaling pathway. In response to interferon-beta (IFN-beta) stimulation, stimulates the JAK-STAT signaling pathway. Acts as a negative regulator of 2-arachidonoylglycerol (2-AG)-mediated synaptic signaling via modulation of DAGLA activity. Has no kinase activity. This Mus musculus (Mouse) protein is Calcium/calmodulin-dependent protein kinase type II subunit alpha (Camk2a).